Reading from the N-terminus, the 424-residue chain is Serine hydroxymethyltransferase (424 aa).

(6S)-5,6,7,8-tetrahydrofolate-binding positions include Leu-119 and 123–125; that span reads GHL. Lys-228 bears the N6-(pyridoxal phosphate)lysine mark. 353–355 lines the (6S)-5,6,7,8-tetrahydrofolate pocket; the sequence is SAF.

This sequence belongs to the SHMT family. Homodimer. It depends on pyridoxal 5'-phosphate as a cofactor.

It localises to the cytoplasm. The enzyme catalyses (6R)-5,10-methylene-5,6,7,8-tetrahydrofolate + glycine + H2O = (6S)-5,6,7,8-tetrahydrofolate + L-serine. The protein operates within one-carbon metabolism; tetrahydrofolate interconversion. It participates in amino-acid biosynthesis; glycine biosynthesis; glycine from L-serine: step 1/1. In terms of biological role, catalyzes the reversible interconversion of serine and glycine with tetrahydrofolate (THF) serving as the one-carbon carrier. Also exhibits THF-independent aldolase activity toward beta-hydroxyamino acids, producing glycine and aldehydes, via a retro-aldol mechanism. The protein is Serine hydroxymethyltransferase of Natronomonas pharaonis (strain ATCC 35678 / DSM 2160 / CIP 103997 / JCM 8858 / NBRC 14720 / NCIMB 2260 / Gabara) (Halobacterium pharaonis).